A 259-amino-acid chain; its full sequence is AHAWGYGPTDGPDKWVSNFPIADGPRQSPIDILPGGASYDSGLKPLSLKYDPSNCLEILNNGHSFQVTFADDSDSSTLKEGPISGVYRLKQFHFHWGASNDKGSEHTVAGTKYPAELHLVHWNTKYPSFGEAASKPDGLAVVGVFLKIGDANASLQKVLDAFNDIRAKGKQTSFADFDPSTLLPGCLDYWTYDGSLTTPPLLESVTWIVCKEPISVSCEQMAKFRSLLFSAEGEPECCMVDNYRPPQPLKGRHVRASFQ.

Ala1 is subject to N-acetylalanine. Positions 2–258 (HAWGYGPTDG…LKGRHVRASF (257 aa)) constitute an Alpha-carbonic anhydrase domain. The active-site Proton donor/acceptor is His63. Residues His93, His95, and His118 each contribute to the Zn(2+) site. Substrate contacts are provided by residues Thr197 and 197 to 198 (TT).

The protein belongs to the alpha-carbonic anhydrase family. Zn(2+) serves as cofactor.

Its subcellular location is the cytoplasm. It carries out the reaction hydrogencarbonate + H(+) = CO2 + H2O. In terms of biological role, catalyzes the reversible hydration of carbon dioxide. The chain is Carbonic anhydrase 1 (ca1) from Chionodraco hamatus (Antarctic teleost icefish).